A 267-amino-acid chain; its full sequence is 4-hydroxy-tetrahydrodipicolinate reductase (267 aa).

Residues 9–14 (GASGRM) and D35 each bind NAD(+). R36 is an NADP(+) binding site. NAD(+) contacts are provided by residues 98–100 (GTT) and 122–125 (ASNF). H155 (proton donor/acceptor) is an active-site residue. Position 156 (H156) interacts with (S)-2,3,4,5-tetrahydrodipicolinate. The active-site Proton donor is K159. 165–166 (GT) is a (S)-2,3,4,5-tetrahydrodipicolinate binding site.

The protein belongs to the DapB family.

Its subcellular location is the cytoplasm. It catalyses the reaction (S)-2,3,4,5-tetrahydrodipicolinate + NAD(+) + H2O = (2S,4S)-4-hydroxy-2,3,4,5-tetrahydrodipicolinate + NADH + H(+). It carries out the reaction (S)-2,3,4,5-tetrahydrodipicolinate + NADP(+) + H2O = (2S,4S)-4-hydroxy-2,3,4,5-tetrahydrodipicolinate + NADPH + H(+). Its pathway is amino-acid biosynthesis; L-lysine biosynthesis via DAP pathway; (S)-tetrahydrodipicolinate from L-aspartate: step 4/4. Catalyzes the conversion of 4-hydroxy-tetrahydrodipicolinate (HTPA) to tetrahydrodipicolinate. The sequence is that of 4-hydroxy-tetrahydrodipicolinate reductase from Chromobacterium violaceum (strain ATCC 12472 / DSM 30191 / JCM 1249 / CCUG 213 / NBRC 12614 / NCIMB 9131 / NCTC 9757 / MK).